Consider the following 377-residue polypeptide: uncharacterized protein (377 aa).

This is an uncharacterized protein from Bacillus subtilis (strain 168).